We begin with the raw amino-acid sequence, 235 residues long: Large ribosomal subunit protein uL1 (235 aa).

Belongs to the universal ribosomal protein uL1 family. In terms of assembly, part of the 50S ribosomal subunit.

Binds directly to 23S rRNA. The L1 stalk is quite mobile in the ribosome, and is involved in E site tRNA release. In terms of biological role, protein L1 is also a translational repressor protein, it controls the translation of the L11 operon by binding to its mRNA. In Corynebacterium diphtheriae (strain ATCC 700971 / NCTC 13129 / Biotype gravis), this protein is Large ribosomal subunit protein uL1.